A 337-amino-acid polypeptide reads, in one-letter code: MTETLRVAVIGAGRMGADHIQRLSKRIHGAEVAAVVDVDLARAQAAVEGIPGAVALADADEALNNGDVNAVLIATPGFLHEDILLKALARDIPILCEKPLTPDAESAWKIVQAEEKLGHKRIQVGFMRRFDAEYAALGQVIRDHELGELLMLHHQHRNPTTPPGFTNEMLINDSVVHEFDAIRFFTGEEITSVQVRLGKATKNAPAGQHDPQHVLVETESGVLADVEIFVNAKFGYEVATQASFEDGIVSIGGDKGPYTRAAGRWGGNVTPGFEERFGAAYDVEIQSWVDAALRGEIGGPTAWDGYATAACCEAGVEAQKNGEKVAVKLNARPALYS.

It belongs to the Gfo/Idh/MocA family. As to quaternary structure, homotetramer.

It carries out the reaction myo-inositol + NAD(+) = scyllo-inosose + NADH + H(+). Involved in the oxidation of myo-inositol (MI) to 2-keto-myo-inositol (2KMI or 2-inosose). In Arthrobacter sp. (strain FB24), this protein is Inositol 2-dehydrogenase.